The chain runs to 336 residues: Fructose-1,6-bisphosphatase class 1 (336 aa).

Positions 90, 112, 114, and 115 each coordinate Mg(2+). Substrate is bound by residues D115–S118, N211, and K277. E283 contributes to the Mg(2+) binding site.

The protein belongs to the FBPase class 1 family. Homotetramer. Mg(2+) is required as a cofactor.

It localises to the cytoplasm. It carries out the reaction beta-D-fructose 1,6-bisphosphate + H2O = beta-D-fructose 6-phosphate + phosphate. The protein operates within carbohydrate biosynthesis; gluconeogenesis. In Pseudomonas entomophila (strain L48), this protein is Fructose-1,6-bisphosphatase class 1.